The sequence spans 171 residues: uncharacterized protein (171 aa).

Residues 30 to 97 form the HTH gntR-type domain; sequence AGRVSAAYHA…PKKGIIICAL (68 aa). Positions 57–76 form a DNA-binding region, H-T-H motif; it reads EIEIARQLGMSRTPVHEAMA.

This is an uncharacterized protein from Agrobacterium vitis (Rhizobium vitis).